The sequence spans 457 residues: Transcription factor CP2-like protein 1 (457 aa).

Residues 1–52 (MLFWHTQPEHYNQHNSGSYLRDVLALPIFKQEEPQLSPENEARLPPLQYVLC) are mediate transcriptional repression. The Grh/CP2 DB domain maps to 43–280 (RLPPLQYVLC…PSPSYNGSPN (238 aa)). Disordered regions lie at residues 219 to 245 (KPKGADRKQETDREKMEKRTAQEKEKY) and 271 to 301 (PSPSYNGSPNSFGLGEGNASPTHPVEALPVG). Residues 221–245 (KGADRKQETDREKMEKRTAQEKEKY) are compositionally biased toward basic and acidic residues. The segment at 261 to 365 (PDVAYQVNSA…IRLFNAIKGR (105 aa)) is SAM2-like domain. Over residues 271-281 (PSPSYNGSPNS) the composition is skewed to polar residues.

Belongs to the grh/CP2 family. CP2 subfamily. Forms homohexamers via its SAM-like domain. Interacts with MTA1; which is indispensable for TFCP2L1-mediated self-renewal-promoting effect and endoderm-inhibiting action.

The protein localises to the nucleus. Its function is as follows. Transcription factor that facilitates establishment and maintenance of pluripotency in embryonic stem cells (ESCs). With KLF2, acts as the major effector of self-renewal that mediates induction of pluripotency downstream of LIF/STAT3 and Wnt/beta-catenin signaling. Required for normal duct development in the salivary gland and kidney. Coordinates the development of the kidney collecting ducts intercalated (IC) and principal (PC) cells, which regulate acid-base and salt-water homeostasis, respectively. Regulates the expression of IC genes including subunits B1 and D2 of the V-ATPase complex, OXGR1, CA12, SLC4A1, AQP6 and IC-specific transcription factor FOXI1. Also regulates the expression of JAG1 and subsequent notch signaling in the collecting duct. JAG1 initiates notch signaling in PCs but inhibits notch signaling in ICs. Acts as a transcriptional suppressor that may suppress UBP1-mediated transcriptional activation. Modulates the placental expression of CYP11A1. This Pongo abelii (Sumatran orangutan) protein is Transcription factor CP2-like protein 1 (TFCP2L1).